A 152-amino-acid chain; its full sequence is uncharacterized protein (152 aa).

The next 4 membrane-spanning stretches (helical) occupy residues 2 to 22, 26 to 46, 92 to 112, and 128 to 148; these read ENLI…LSFL, FITF…HLIE, VVPI…FILL, and YIIT…YFLK.

It localises to the membrane. This is an uncharacterized protein from Acanthamoeba polyphaga mimivirus (APMV).